The primary structure comprises 78 residues: U7-lycotoxin-Ls1d (78 aa).

Residues 1 to 22 (MKLIIFTGLALLLIVSLIDVEA) form the signal peptide. Positions 23-26 (QNEG) are excised as a propeptide.

This sequence belongs to the neurotoxin 19 (CSTX) family. 07 (U7-Lctx) subfamily. Contains 4 disulfide bonds. As to expression, expressed by the venom gland.

The protein localises to the secreted. This is U7-lycotoxin-Ls1d from Lycosa singoriensis (Wolf spider).